Here is a 103-residue protein sequence, read N- to C-terminus: CLAVATA3/ESR (CLE)-related protein 22 (103 aa).

Residues 1–34 form the signal peptide; that stretch reads MGNYYSRRKSRKHITTVALIILLLLLFLFLYAKA. Residues 37 to 103 are disordered; it reads SSPNIHHHST…FTGPNPLHNR (67 aa). Basic residues predominate over residues 41-50; that stretch reads IHHHSTHGSL. Over residues 66-76 the composition is skewed to polar residues; the sequence is NAASSRGSKYT. P97 carries the post-translational modification Hydroxyproline. O-linked (Ara...) hydroxyproline glycosylation is present at P97.

The protein belongs to the CLV3/ESR signal peptide family. Post-translationally, the O-glycosylation (arabinosylation) of the hydroxyproline Pro-97 enhances binding affinity of the CLE22p peptide for its receptor. As to expression, mostly expressed in stems and apex, and, to a lower extent, in seedlings, leaves, flowers and siliques.

The protein localises to the secreted. Its subcellular location is the extracellular space. Its function is as follows. Extracellular signal peptide that regulates cell fate. Represses root apical meristem maintenance. The sequence is that of CLAVATA3/ESR (CLE)-related protein 22 from Arabidopsis thaliana (Mouse-ear cress).